Consider the following 145-residue polypeptide: Ecdysteroid-regulated 16 kDa protein (145 aa).

The signal sequence occupies residues 1–16; that stretch reads MLFYITVTVLLVSAQA. 2 cysteine pairs are disulfide-bonded: Cys22-Cys137 and Cys90-Cys97. N-linked (GlcNAc...) asparagine glycosylation occurs at Asn51.

It belongs to the NPC2 family.

It is found in the secreted. This chain is Ecdysteroid-regulated 16 kDa protein (ESR16), found in Manduca sexta (Tobacco hawkmoth).